A 234-amino-acid polypeptide reads, in one-letter code: Thymidylate kinase (234 aa).

Glycine 10–threonine 17 contacts ATP.

The protein belongs to the thymidylate kinase family.

It catalyses the reaction dTMP + ATP = dTDP + ADP. Phosphorylation of dTMP to form dTDP in both de novo and salvage pathways of dTTP synthesis. In Cyanothece sp. (strain PCC 7425 / ATCC 29141), this protein is Thymidylate kinase.